The primary structure comprises 811 residues: E3 ubiquitin-protein ligase RNF10 (811 aa).

A compositionally biased stretch (polar residues) spans 1 to 10; the sequence is MPLSSPNAAA. The disordered stretch occupies residues 1–119; the sequence is MPLSSPNAAA…SFNGGRRDEV (119 aa). Residue S5 is modified to Phosphoserine. 3 stretches are compositionally biased toward low complexity: residues 18-31, 78-90, and 104-113; these read NSGS…SGSS, NNQS…QKSK, and SKLFSSSFNG. The interaction with MEOX2 stretch occupies residues 101-185; that stretch reads GGSSKLFSSS…FNKELFLQAN (85 aa). Phosphoserine occurs at positions 110 and 128. Residues 225–267 form an RING-type zinc finger; the sequence is CPICLYPPTAAKITRCGHIFCWACILHYLSLSEKTWSKCPICY. Polar residues predominate over residues 653–662; that stretch reads DSALGPTSTE. Disordered stretches follow at residues 653–672, 724–761, and 776–811; these read DSAL…ISPL, DVWP…VPSF, and LDTP…VHTK. Residues 724-736 are compositionally biased toward basic and acidic residues; it reads DVWPKTAPKKDEN. Positions 802–811 are enriched in polar residues; it reads LFSTSVVHTK.

It belongs to the RNF10 family. Interacts with MEOX2.

The protein resides in the cytoplasm. The protein localises to the nucleus. It catalyses the reaction S-ubiquitinyl-[E2 ubiquitin-conjugating enzyme]-L-cysteine + [acceptor protein]-L-lysine = [E2 ubiquitin-conjugating enzyme]-L-cysteine + N(6)-ubiquitinyl-[acceptor protein]-L-lysine.. It functions in the pathway protein modification; protein ubiquitination. E3 ubiquitin-protein ligase that catalyzes monoubiquitination of 40S ribosomal proteins RPS2/us5 and RPS3/us3 in response to ribosome stalling. Part of a ribosome quality control that takes place when ribosomes have stalled during translation initiation (iRQC): RNF10 acts by mediating monoubiquitination of RPS2/us5 and RPS3/us3, promoting their degradation by the proteasome. Also promotes ubiquitination of 40S ribosomal proteins in response to ribosome stalling during translation elongation. The action of RNF10 in iRQC is counteracted by USP10. May also act as a transcriptional factor involved in the regulation of MAG (Myelin-associated glycoprotein) expression. Acts as a regulator of Schwann cell differentiation and myelination. The protein is E3 ubiquitin-protein ligase RNF10 of Homo sapiens (Human).